A 362-amino-acid polypeptide reads, in one-letter code: Peptide chain release factor 1 (362 aa).

Gln238 is modified (N5-methylglutamine).

Belongs to the prokaryotic/mitochondrial release factor family. Post-translationally, methylated by PrmC. Methylation increases the termination efficiency of RF1.

It is found in the cytoplasm. In terms of biological role, peptide chain release factor 1 directs the termination of translation in response to the peptide chain termination codons UAG and UAA. In Psychrobacter cryohalolentis (strain ATCC BAA-1226 / DSM 17306 / VKM B-2378 / K5), this protein is Peptide chain release factor 1.